Reading from the N-terminus, the 371-residue chain is MKGISKVLSASIVLMKLKGVYSTTVLCGDSTQGLQGTTQPSYVLVPSAPETIANCGYSPQNMYVPSTPTTMPSTVPGTTGESETPTSPTSSPTEDVGTCKIAVVKHCDAPGTSSTPCEPEQTLAPSQPVAATIATPLVVASVQTPQAAVTILTPKAVSAQPATIISPFNQAPGYYNSAIPGQILTGNVLSPSASSCQVVPGTTGSSTPQQLPGAVSSGTIPCQIVQGTQSSGNTPGQQFLPGIVPVGSLQPDQATSGTPTPSVSQSQSGQQCCCTPPITNPVMPTPMGISSNGYPSSTAYAPTLGQLGPCIDTQKSTSSCEPKEKPVAQYGMEACAAPTPTAVLGNAEYLLSPGMYNSLNSPCNACCQQQC.

The N-terminal stretch at M1 to S22 is a signal peptide. 2 stretches are compositionally biased toward low complexity: residues P65–E94 and T255–Q270. 2 disordered regions span residues P65–D95 and Q229–Q270.

Post-translationally, glycosylated.

The protein resides in the spore polar tube. Involved with PTP2 and PTP3 in formation of a polar tube through which the infectious agent is passed on to the host cell. In Encephalitozoon intestinalis (Microsporidian parasite), this protein is Polar tube protein 1 (PTP1).